A 484-amino-acid chain; its full sequence is Probable D-lactate dehydrogenase, mitochondrial (484 aa).

A mitochondrion-targeting transit peptide spans 1–52 (MAMLLRVATQRLSPWRSFCSRGSQGGLSQDFVEALKAVVGSPHVSTASAVRE). Lys-36 carries the N6-acetyllysine modification. The FAD-binding PCMH-type domain maps to 62 to 242 (RCQPPDAVVW…TSTTLRLHPA (181 aa)). N6-acetyllysine is present on Lys-292. N6-acetyllysine; alternate is present on Lys-335. Lys-335 carries the N6-succinyllysine; alternate modification. Residues Lys-422 and Lys-449 each carry the N6-acetyllysine modification.

The protein belongs to the FAD-binding oxidoreductase/transferase type 4 family. Interacts with CSRP3. It depends on FAD as a cofactor. In terms of tissue distribution, readily detected in liver and kidney, with a weaker signal observed in heart, skeletal muscle, stomach, brain, and lung.

It localises to the mitochondrion. It carries out the reaction (R)-lactate + 2 Fe(III)-[cytochrome c] = 2 Fe(II)-[cytochrome c] + pyruvate + 2 H(+). In terms of biological role, involved in D-lactate, but not L-lactate catabolic process. The sequence is that of Probable D-lactate dehydrogenase, mitochondrial from Mus musculus (Mouse).